Here is a 302-residue protein sequence, read N- to C-terminus: NAD kinase 2 (302 aa).

The Proton acceptor role is filled by aspartate 78. Residues 78–79, 152–153, aspartate 182, 193–198, and alanine 217 each bind NAD(+); these read DG, NE, and TAYALS.

It belongs to the NAD kinase family. The cofactor is a divalent metal cation.

The protein localises to the cytoplasm. The catalysed reaction is NAD(+) + ATP = ADP + NADP(+) + H(+). Functionally, involved in the regulation of the intracellular balance of NAD and NADP, and is a key enzyme in the biosynthesis of NADP. Catalyzes specifically the phosphorylation on 2'-hydroxyl of the adenosine moiety of NAD to yield NADP. The sequence is that of NAD kinase 2 from Parasynechococcus marenigrum (strain WH8102).